Reading from the N-terminus, the 206-residue chain is Large ribosomal subunit protein uL4 (206 aa).

Positions 46 to 77 are disordered; sequence GTRAQKDREQVRHSTKKPFKQKGTGRARAGMT. Residues 58-70 are compositionally biased toward basic residues; the sequence is HSTKKPFKQKGTG.

Belongs to the universal ribosomal protein uL4 family. In terms of assembly, part of the 50S ribosomal subunit.

Functionally, one of the primary rRNA binding proteins, this protein initially binds near the 5'-end of the 23S rRNA. It is important during the early stages of 50S assembly. It makes multiple contacts with different domains of the 23S rRNA in the assembled 50S subunit and ribosome. Its function is as follows. Forms part of the polypeptide exit tunnel. The sequence is that of Large ribosomal subunit protein uL4 from Polaromonas naphthalenivorans (strain CJ2).